A 78-amino-acid chain; its full sequence is GNELLEAGEECDCGTPGNPCCDAATCKLRPGAQCAEGLCCDQCRFMKEGTVCRIARGDDMDDYCNGISAGCPRNPFHA.

The Disintegrin domain occupies 1–78; sequence GNELLEAGEE…AGCPRNPFHA (78 aa). 6 disulfide bridges follow: C11–C26, C13–C21, C20–C43, C34–C40, C39–C64, and C52–C71. Residues 56 to 58 carry the Cell attachment site motif; it reads RGD.

It belongs to the venom metalloproteinase (M12B) family. P-II subfamily. P-IIa sub-subfamily. As to quaternary structure, monomer. Expressed by the venom gland.

It is found in the secreted. Functionally, this recombinant disintegrin antagonizes integrins alpha-IIb/beta-3 (ITGA2B/ITGB3) and alpha-V/beta-3 (ITGAV/ITGB3). On ITGA2B/ITGB3, it interferes with the outside/-in phosphorylation of the focal adhesion kinase (PTK2 / FAK) downstream of the integrin. It strongly inhibits platelet aggregation induced by ADP, thrombin, and collagen, abolishes and reverses dynamic platelet recruitment to immobilized fibrinogen. In vivo, it induces a dramatic increase in the tail bleeding time, and has a strong antithrombotic activity. On ITGAV/ITGB3, it inhibits the adhesion of ITGAV/ITGB3-expressing human microvascular endothelial cell line and murine melanoma cell line to vitronectin (IC(50) are 555 nM and 225 nM, respectively), and transiently inhibits their proliferation without direct cell toxicity. In vivo, it potently inhibits angiogenesis and metastasis, probably due to its capability to strongly inhibit the expression of VEGF and its receptors in endothelial cells. It also inhibits tumor cell migration in vitro. This is Disintegrin DisBa-01 from Bothrops alternatus (Urutu).